Consider the following 360-residue polypeptide: Chorismate synthase (360 aa).

NADP(+) is bound at residue Arg47. FMN contacts are provided by residues 124-126 (RSS), 240-241 (NA), Gly285, 300-304 (KPVAT), and Arg326.

It belongs to the chorismate synthase family. As to quaternary structure, homotetramer. Requires FMNH2 as cofactor.

It carries out the reaction 5-O-(1-carboxyvinyl)-3-phosphoshikimate = chorismate + phosphate. It participates in metabolic intermediate biosynthesis; chorismate biosynthesis; chorismate from D-erythrose 4-phosphate and phosphoenolpyruvate: step 7/7. Functionally, catalyzes the anti-1,4-elimination of the C-3 phosphate and the C-6 proR hydrogen from 5-enolpyruvylshikimate-3-phosphate (EPSP) to yield chorismate, which is the branch point compound that serves as the starting substrate for the three terminal pathways of aromatic amino acid biosynthesis. This reaction introduces a second double bond into the aromatic ring system. The sequence is that of Chorismate synthase from Cytophaga hutchinsonii (strain ATCC 33406 / DSM 1761 / CIP 103989 / NBRC 15051 / NCIMB 9469 / D465).